The chain runs to 573 residues: Kinesin light chain 1 (573 aa).

The stretch at 27–156 (KTKQVIQGLE…HLEFMNQLKK (130 aa)) forms a coiled coil. Residues 155-176 (KKYDDDISPSEDKDTDSTKEPL) are compositionally biased toward basic and acidic residues. The segment at 155–203 (KKYDDDISPSEDKDTDSTKEPLDDLFPNDEDDPGQGIQQQHSSAAAAAQ) is disordered. Residue S162 is modified to Phosphoserine. Residues 188 to 203 (GQGIQQQHSSAAAAAQ) show a composition bias toward low complexity. TPR repeat units lie at residues 213–246 (LRTLHNLVIQYASQGRYEVAVPLCKQALEDLEKT), 255–288 (ATMLNILALVYRDQNKYKDAANLLNDALAIREKT), 297–330 (AATLNNLAVLYGKRGKYKEAEPLCKRALEIREKV), 339–372 (AKQLNNLALLCQNQGKYEEVEYYYQRALEIYQTK), and 381–414 (AKTKNNLASCYLKQGKFKQAETLYKEILTRAHER). At Y449 the chain carries Phosphotyrosine. S460 carries the phosphoserine modification. The stretch at 464-497 (TTTLKNLGALYRRQGKFEAAETLEEAAMRSRKQG) is one TPR 6 repeat. Residues S521 and S524 each carry the phosphoserine; by AMPK modification. E547 is modified (phosphoserine). The segment at 553–573 (SGRASFCGKRQQQQWPGRRHR) is disordered.

It belongs to the kinesin light chain family. Oligomeric complex composed of two heavy chains and two light chains. Interacts with SPAG9. Interacts with ATCAY; may link mitochondria to KLC1 and regulate mitochondria localization into neuron projections. Interacts (via TPR repeats) with TOR1A; the interaction associates TOR1A with the kinesin oligomeric complex. Interacts with BORCS5. Interacts with MAPK8IP3/JIP3 and NTRK2/TRKB; interaction with NTRK2/TRKB is mediated by MAPK8IP3/JIP3. Interacts with CLSTN1; phosphorylation at Ser-460 inhibits interaction with CLSTN1. In terms of assembly, (Microbial infection) Interacts with adenovirus hexon-interlacing protein; this interaction leads to capsid disruption at the nuclear pore complex during virus entry into host cell. Phosphorylation at Ser-460 by ERK inhibits interaction with CLSTN1 and localization to cytoplasmic vesicles. In terms of tissue distribution, found in a variety of tissues. Mostly abundant in brain and spine.

It is found in the cell projection. The protein localises to the growth cone. Its subcellular location is the cytoplasmic vesicle. The protein resides in the cytoplasm. It localises to the cytoskeleton. Its function is as follows. Kinesin is a microtubule-associated force-producing protein that may play a role in organelle transport. The light chain may function in coupling of cargo to the heavy chain or in the modulation of its ATPase activity. This Homo sapiens (Human) protein is Kinesin light chain 1 (KLC1).